Here is a 284-residue protein sequence, read N- to C-terminus: Bifunctional protein FolD (284 aa).

NADP(+) is bound by residues 165–167 (GRS), serine 190, and isoleucine 231.

The protein belongs to the tetrahydrofolate dehydrogenase/cyclohydrolase family. Homodimer.

It carries out the reaction (6R)-5,10-methylene-5,6,7,8-tetrahydrofolate + NADP(+) = (6R)-5,10-methenyltetrahydrofolate + NADPH. The enzyme catalyses (6R)-5,10-methenyltetrahydrofolate + H2O = (6R)-10-formyltetrahydrofolate + H(+). It participates in one-carbon metabolism; tetrahydrofolate interconversion. Its function is as follows. Catalyzes the oxidation of 5,10-methylenetetrahydrofolate to 5,10-methenyltetrahydrofolate and then the hydrolysis of 5,10-methenyltetrahydrofolate to 10-formyltetrahydrofolate. The chain is Bifunctional protein FolD from Clostridium kluyveri (strain ATCC 8527 / DSM 555 / NBRC 12016 / NCIMB 10680 / K1).